We begin with the raw amino-acid sequence, 851 residues long: Glycogen phosphorylase, liver form (851 aa).

A2 bears the N-acetylalanine mark. Residue S15 is modified to Phosphoserine; by PHK; in form phosphorylase a. AMP-binding positions include 43–45 (DRN), Y76, and R310. K364 bears the N6-succinyllysine mark. K470 carries the N6-acetyllysine modification. Phosphoserine occurs at positions 524, 561, and 639. K681 bears the N6-(pyridoxal phosphate)lysine mark. Residue K796 is modified to N6-acetyllysine.

This sequence belongs to the glycogen phosphorylase family. In terms of assembly, homodimer; enzymatically active. Interacts with PPP1R3B; recruits the phosphatase PP1 which dephosphorylates and inactivates PYGL/glycogen phosphorylase. Pyridoxal 5'-phosphate serves as cofactor. In terms of processing, acetylation, which is up-regulated by glucose and insulin and down-regulated by glucagon, inhibits the glycogen phosphorylase activity by promoting PPP1R3B-mediated recruitment of phosphatase PP1 and Ser-15 dephosphorylation. Phosphorylation at Ser-15 converts inactive phosphorylase b into active phosphorylase a. Dephosphorylation of Ser-15 by phosphatase PP1 inactivates the enzyme.

The protein resides in the cytoplasm. It is found in the cytosol. It catalyses the reaction [(1-&gt;4)-alpha-D-glucosyl](n) + phosphate = [(1-&gt;4)-alpha-D-glucosyl](n-1) + alpha-D-glucose 1-phosphate. Allosterically regulated through the non-covalent binding of metabolites, being activated by AMP and inhibited by ATP, ADP, and glucose-6-phosphate. The activity is also controlled by post-translational modifications including phosphorylation and acetylation. In terms of biological role, allosteric enzyme that catalyzes the rate-limiting step in glycogen catabolism, the phosphorolytic cleavage of glycogen to produce glucose-1-phosphate, and plays a central role in maintaining cellular and organismal glucose homeostasis. In Bos taurus (Bovine), this protein is Glycogen phosphorylase, liver form.